The primary structure comprises 118 residues: Large ribosomal subunit protein uL18 (118 aa).

It belongs to the universal ribosomal protein uL18 family. As to quaternary structure, part of the 50S ribosomal subunit; part of the 5S rRNA/L5/L18/L25 subcomplex. Contacts the 5S and 23S rRNAs.

Its function is as follows. This is one of the proteins that bind and probably mediate the attachment of the 5S RNA into the large ribosomal subunit, where it forms part of the central protuberance. In Cupriavidus pinatubonensis (strain JMP 134 / LMG 1197) (Cupriavidus necator (strain JMP 134)), this protein is Large ribosomal subunit protein uL18.